We begin with the raw amino-acid sequence, 141 residues long: Nucleoside diphosphate kinase (141 aa).

Residues lysine 11, phenylalanine 59, arginine 87, threonine 93, arginine 104, and asparagine 114 each coordinate ATP. Catalysis depends on histidine 117, which acts as the Pros-phosphohistidine intermediate.

It belongs to the NDK family. In terms of assembly, homotetramer. The cofactor is Mg(2+).

The protein resides in the cytoplasm. The enzyme catalyses a 2'-deoxyribonucleoside 5'-diphosphate + ATP = a 2'-deoxyribonucleoside 5'-triphosphate + ADP. The catalysed reaction is a ribonucleoside 5'-diphosphate + ATP = a ribonucleoside 5'-triphosphate + ADP. Functionally, major role in the synthesis of nucleoside triphosphates other than ATP. The ATP gamma phosphate is transferred to the NDP beta phosphate via a ping-pong mechanism, using a phosphorylated active-site intermediate. The sequence is that of Nucleoside diphosphate kinase from Cupriavidus taiwanensis (strain DSM 17343 / BCRC 17206 / CCUG 44338 / CIP 107171 / LMG 19424 / R1) (Ralstonia taiwanensis (strain LMG 19424)).